The following is a 397-amino-acid chain: Cytoplasmic tRNA 2-thiolation protein 2 (397 aa).

The protein belongs to the CTU2/NCS2 family.

It localises to the cytoplasm. It functions in the pathway tRNA modification; 5-methoxycarbonylmethyl-2-thiouridine-tRNA biosynthesis. Plays a central role in 2-thiolation of mcm(5)S(2)U at tRNA wobble positions of tRNA(Lys), tRNA(Glu) and tRNA(Gln). May act by forming a heterodimer with NCS6/CTU1 that ligates sulfur from thiocarboxylated URM1 onto the uridine of tRNAs at wobble position. The polypeptide is Cytoplasmic tRNA 2-thiolation protein 2 (Drosophila grimshawi (Hawaiian fruit fly)).